The primary structure comprises 441 residues: MKLFDTLTQEQKNINKEVINIYSCGPTIYDYIHIGNARPIILMDTLIRFLESEGIKVNFLQNITDIDDKIIEKAIQENKTEKEITDKYLSAFLQNLKDLKIRMPDKLIPISEKISEMNLFIDDLVKLEAAYNVDGDVYFDIQKFSDEYGKLSNKKINDLISGNRVEIEDKKNNPLDFSVWKKTEKGITFDSNFGKGRPGWHTECALLIDEYFKGETIDIHSGGIDLQFPHHENERIQFIAKHGKEISDIWVHNGHLTINGEKMSKSLGNTMTLTNFLANYNSDILRWIFLTTYYKQPLNINDDLIEQANKFIQKINNLSKKIKQLLIENKFVKTNQFDEEIIKQFKIHMKNDLNTSRVLTLLEDTLKDINKLSTLKEFDDLFLKINSLNYILKTLGLSININTFVSDEEQNLFLLWKKIVSEKDFEKADEIRKVLISKGIL.

Position 24 (cysteine 24) interacts with Zn(2+). The 'HIGH' region signature appears at 26–36 (PTIYDYIHIGN). Zn(2+) is bound by residues cysteine 204, histidine 230, and glutamate 234. A 'KMSKS' region motif is present at residues 262-266 (KMSKS). Lysine 265 is an ATP binding site.

It belongs to the class-I aminoacyl-tRNA synthetase family. As to quaternary structure, monomer. The cofactor is Zn(2+).

It localises to the cytoplasm. The enzyme catalyses tRNA(Cys) + L-cysteine + ATP = L-cysteinyl-tRNA(Cys) + AMP + diphosphate. This chain is Cysteine--tRNA ligase, found in Mesoplasma florum (strain ATCC 33453 / NBRC 100688 / NCTC 11704 / L1) (Acholeplasma florum).